A 590-amino-acid polypeptide reads, in one-letter code: MNIYRTHLCDQLRKEHINQEVTLSGWIYRKRDHGKIIFVDLRDHYGITQLVFNEADNQNFQLITHLRLESVITVKGIVVARDSSTINTAVSTGFIEVVVKHVIIEGEADPLPLNITSTQDYPEEIRLKYRFLDLRRDKVKNNIILRSKIISELRKSMEAMGFIEIQTPILTSSSPEGARDYLVPSRIHHGKFYALPQAPQLFKQILMVSGFDKYFQIAPCFRDEDARSDRSPGEFYQLDIEMSFVSQEDVFNVIEPVLLNVFSKFSNKTIDKEFPRISYHDAMLHYGSDKPDLRNPLIIQDVTEIFRDSQFNIFNSNIKQGMVVRAIPAPNTATNPRSFFDNKIEFAKTLGAQGLGYITFNDDFSAKGPIAKFLDEERLNRIKSICNLQPGDSVFFVSETEDKATELAGEVRTLLGKELNLIEKDTFRFCWIIDFPYFKYDKKEKSINFFHNPFSMPQGGLEALNNQNPLDILAYQYDIVCNGIEISSGAIRNHKLDIMYKAFSIAGYTKEMVDQKFNSLTRAFKFGAPPHGGIAPGIDRMVMLLADATNIREVICFPLNQSGEDLLMSAPSEIDKEHLKLLSLSITKKS.

Residue Glu176 coordinates L-aspartate. The tract at residues 200–203 is aspartate; sequence QLFK. L-aspartate is bound by residues Arg222 and His451. 222–224 serves as a coordination point for ATP; the sequence is RDE. Glu485 contacts ATP. Arg492 is a binding site for L-aspartate. Residue 537-540 coordinates ATP; it reads GIDR.

It belongs to the class-II aminoacyl-tRNA synthetase family. Type 1 subfamily. Homodimer.

The protein localises to the cytoplasm. It carries out the reaction tRNA(Asx) + L-aspartate + ATP = L-aspartyl-tRNA(Asx) + AMP + diphosphate. Functionally, aspartyl-tRNA synthetase with relaxed tRNA specificity since it is able to aspartylate not only its cognate tRNA(Asp) but also tRNA(Asn). Reaction proceeds in two steps: L-aspartate is first activated by ATP to form Asp-AMP and then transferred to the acceptor end of tRNA(Asp/Asn). The chain is Aspartate--tRNA(Asp/Asn) ligase from Ehrlichia chaffeensis (strain ATCC CRL-10679 / Arkansas).